The chain runs to 215 residues: Vesicle-trafficking protein SEC22b-A (215 aa).

The Cytoplasmic portion of the chain corresponds to 1 to 190; sequence MVLQTMIVRV…RSDAKYLNTR (190 aa). One can recognise a Longin domain in the interval 6–119; it reads MIVRVADSLP…YSFIEFDTYI (114 aa). Residues 134 to 194 enclose the v-SNARE coiled-coil homology domain; sequence NLGNINSELH…KYLNTRSTYA (61 aa). The chain crosses the membrane as a helical span at residues 191–213; the sequence is STYAKVAAGAVIIITLIIYVRFW. Residues 214-215 lie on the Lumenal side of the membrane; it reads WL.

Belongs to the synaptobrevin family. As to quaternary structure, component of 2 distinct SNARE complexes.

Its subcellular location is the endoplasmic reticulum membrane. The protein localises to the endoplasmic reticulum-Golgi intermediate compartment membrane. The protein resides in the golgi apparatus. It is found in the cis-Golgi network membrane. It localises to the trans-Golgi network membrane. Its subcellular location is the melanosome. In terms of biological role, SNARE involved in targeting and fusion of ER-derived transport vesicles with the Golgi complex as well as Golgi-derived retrograde transport vesicles with the ER. The protein is Vesicle-trafficking protein SEC22b-A of Danio rerio (Zebrafish).